The primary structure comprises 237 residues: Phosphoribosylaminoimidazole-succinocarboxamide synthase (237 aa).

The protein belongs to the SAICAR synthetase family.

It carries out the reaction 5-amino-1-(5-phospho-D-ribosyl)imidazole-4-carboxylate + L-aspartate + ATP = (2S)-2-[5-amino-1-(5-phospho-beta-D-ribosyl)imidazole-4-carboxamido]succinate + ADP + phosphate + 2 H(+). It functions in the pathway purine metabolism; IMP biosynthesis via de novo pathway; 5-amino-1-(5-phospho-D-ribosyl)imidazole-4-carboxamide from 5-amino-1-(5-phospho-D-ribosyl)imidazole-4-carboxylate: step 1/2. The protein is Phosphoribosylaminoimidazole-succinocarboxamide synthase of Salmonella agona (strain SL483).